A 511-amino-acid chain; its full sequence is Glucans biosynthesis protein G (511 aa).

Residues 1 to 22 (MMKMRWLSAAVMLTLYTSSSWA) form the signal peptide.

This sequence belongs to the OpgD/OpgG family.

Its subcellular location is the periplasm. It functions in the pathway glycan metabolism; osmoregulated periplasmic glucan (OPG) biosynthesis. In terms of biological role, involved in the biosynthesis of osmoregulated periplasmic glucans (OPGs). In Shigella boydii serotype 4 (strain Sb227), this protein is Glucans biosynthesis protein G.